Consider the following 886-residue polypeptide: Protein translocase subunit SecA (886 aa).

Residues glutamine 81, glycine 99–threonine 103, and aspartate 489 contribute to the ATP site.

It belongs to the SecA family.

The protein resides in the plastid. The protein localises to the chloroplast stroma. It is found in the chloroplast thylakoid membrane. It catalyses the reaction ATP + H2O + cellular proteinSide 1 = ADP + phosphate + cellular proteinSide 2.. In terms of biological role, has a central role in coupling the hydrolysis of ATP to the transfer of proteins across the thylakoid membrane. The protein is Protein translocase subunit SecA of Phaeodactylum tricornutum (strain CCAP 1055/1).